We begin with the raw amino-acid sequence, 395 residues long: S-adenosylmethionine synthase (395 aa).

Residue His-16 coordinates ATP. Position 18 (Asp-18) interacts with Mg(2+). K(+) is bound at residue Glu-44. Glu-57 and Gln-100 together coordinate L-methionine. The tract at residues 100-110 is flexible loop; that stretch reads QSPDIAQGVDR. Residues 167 to 169, 233 to 234, Asp-242, 248 to 249, Ala-265, and Lys-269 contribute to the ATP site; these read DAK, RF, and RK. Residue Asp-242 participates in L-methionine binding. Residue Lys-273 participates in L-methionine binding.

Belongs to the AdoMet synthase family. In terms of assembly, homotetramer; dimer of dimers. Mg(2+) is required as a cofactor. Requires K(+) as cofactor.

The protein resides in the cytoplasm. The enzyme catalyses L-methionine + ATP + H2O = S-adenosyl-L-methionine + phosphate + diphosphate. It functions in the pathway amino-acid biosynthesis; S-adenosyl-L-methionine biosynthesis; S-adenosyl-L-methionine from L-methionine: step 1/1. Its function is as follows. Catalyzes the formation of S-adenosylmethionine (AdoMet) from methionine and ATP. The overall synthetic reaction is composed of two sequential steps, AdoMet formation and the subsequent tripolyphosphate hydrolysis which occurs prior to release of AdoMet from the enzyme. In Burkholderia vietnamiensis (strain G4 / LMG 22486) (Burkholderia cepacia (strain R1808)), this protein is S-adenosylmethionine synthase.